A 475-amino-acid chain; its full sequence is Tubulin epsilon chain (475 aa).

148–154 (GGGTGSG) is a binding site for GTP.

It belongs to the tubulin family. In terms of assembly, found in a complex with TEDC1, TEDC2, TUBE1 and TUBD1.

It is found in the cytoplasm. The protein localises to the cytoskeleton. The protein resides in the microtubule organizing center. Its subcellular location is the centrosome. This Mus musculus (Mouse) protein is Tubulin epsilon chain (Tube1).